The chain runs to 176 residues: Ribosome maturation factor RimM (176 aa).

The region spanning Asp97–Phe176 is the PRC barrel domain.

Belongs to the RimM family. Binds ribosomal protein uS19.

It is found in the cytoplasm. In terms of biological role, an accessory protein needed during the final step in the assembly of 30S ribosomal subunit, possibly for assembly of the head region. Essential for efficient processing of 16S rRNA. May be needed both before and after RbfA during the maturation of 16S rRNA. It has affinity for free ribosomal 30S subunits but not for 70S ribosomes. The protein is Ribosome maturation factor RimM of Shewanella denitrificans (strain OS217 / ATCC BAA-1090 / DSM 15013).